The chain runs to 239 residues: tRNA (guanine-N(7)-)-methyltransferase (239 aa).

S-adenosyl-L-methionine-binding residues include E68, E93, D120, and D143. Residue D143 is part of the active site. Residues K147, D180, and T217–E220 each bind substrate.

It belongs to the class I-like SAM-binding methyltransferase superfamily. TrmB family.

The enzyme catalyses guanosine(46) in tRNA + S-adenosyl-L-methionine = N(7)-methylguanosine(46) in tRNA + S-adenosyl-L-homocysteine. It participates in tRNA modification; N(7)-methylguanine-tRNA biosynthesis. Functionally, catalyzes the formation of N(7)-methylguanine at position 46 (m7G46) in tRNA. This chain is tRNA (guanine-N(7)-)-methyltransferase, found in Vibrio cholerae serotype O1 (strain ATCC 39315 / El Tor Inaba N16961).